We begin with the raw amino-acid sequence, 593 residues long: MRTHYCSAVNELSLDKQITVCGWVHNRRDHGGVIFLDIRDRSGLLQVVYEPENKEIFAIAEKLRSEFVVRVTGIVRKRPEGMINDKMETGRVEVIGIQLEILNQSPTPPFLPDDHQIINEDLRYKYRYIDLRRAVMQKKLTLRHKLNSCIRNYLNEQNFLDIETPMLTKATPEGARDYLVPSRVHPGQFYALPQSPQLFKQLLMMSGFDKYYQIVRCFRDEDLRADRQPEFTQLDIEMAFINEEDILQLIEGLLKVVFKEILNITLPDKLPRMSYKEAMTRYGSDKPDLRNPLELIDIADLVKDCDFNVFASAANDNSGRVVALKLPNGCDLSRKDLDNYGQFVTIYGAKGLAYIKVNDLSAGMAGLQSPILKFLSETAVQSILNRVEAQTGDVIFFGADKAHVVNESMGALRNKLGHDRNLINPGWQLLWVIDWPMFELDPQSNKLQPMHHPFTSPQELSAEALRSKPTQTLAKAYDIVINGYEIGGGSIRIHQPELQKTVFDLIGIDEQEAHEKFGFLLDALQYGAPPHGGIALGIDRLAMLLTDSTSIRDVIAFPKTQTASCPLTSAPSPAGNAQLTELGIRLAPTITTK.

L-aspartate is bound at residue Glu-173. Positions 197–200 are aspartate; sequence QLFK. Residue Arg-219 participates in L-aspartate binding. ATP-binding positions include 219–221 and Gln-228; that span reads RDE. His-451 lines the L-aspartate pocket. Position 485 (Glu-485) interacts with ATP. L-aspartate is bound at residue Arg-492. ATP is bound at residue 537 to 540; that stretch reads GIDR.

Belongs to the class-II aminoacyl-tRNA synthetase family. Type 1 subfamily. Homodimer.

It localises to the cytoplasm. The catalysed reaction is tRNA(Asx) + L-aspartate + ATP = L-aspartyl-tRNA(Asx) + AMP + diphosphate. In terms of biological role, aspartyl-tRNA synthetase with relaxed tRNA specificity since it is able to aspartylate not only its cognate tRNA(Asp) but also tRNA(Asn). Reaction proceeds in two steps: L-aspartate is first activated by ATP to form Asp-AMP and then transferred to the acceptor end of tRNA(Asp/Asn). In Legionella pneumophila (strain Paris), this protein is Aspartate--tRNA(Asp/Asn) ligase.